Reading from the N-terminus, the 276-residue chain is Large ribosomal subunit protein uL2 (276 aa).

The disordered stretch occupies residues 221-276 (RGSAMNPNDHPHGGGEGRAPIGRKSPMTPWGKKARGVKTRDRKKASNALIIRRRKK). Basic residues predominate over residues 252–276 (KKARGVKTRDRKKASNALIIRRRKK).

The protein belongs to the universal ribosomal protein uL2 family. Part of the 50S ribosomal subunit. Forms a bridge to the 30S subunit in the 70S ribosome.

Functionally, one of the primary rRNA binding proteins. Required for association of the 30S and 50S subunits to form the 70S ribosome, for tRNA binding and peptide bond formation. It has been suggested to have peptidyltransferase activity; this is somewhat controversial. Makes several contacts with the 16S rRNA in the 70S ribosome. This chain is Large ribosomal subunit protein uL2, found in Aster yellows witches'-broom phytoplasma (strain AYWB).